We begin with the raw amino-acid sequence, 232 residues long: 2-C-methyl-D-erythritol 4-phosphate cytidylyltransferase (232 aa).

Belongs to the IspD/TarI cytidylyltransferase family. IspD subfamily.

The enzyme catalyses 2-C-methyl-D-erythritol 4-phosphate + CTP + H(+) = 4-CDP-2-C-methyl-D-erythritol + diphosphate. It functions in the pathway isoprenoid biosynthesis; isopentenyl diphosphate biosynthesis via DXP pathway; isopentenyl diphosphate from 1-deoxy-D-xylulose 5-phosphate: step 2/6. In terms of biological role, catalyzes the formation of 4-diphosphocytidyl-2-C-methyl-D-erythritol from CTP and 2-C-methyl-D-erythritol 4-phosphate (MEP). The protein is 2-C-methyl-D-erythritol 4-phosphate cytidylyltransferase of Bacillus velezensis (strain DSM 23117 / BGSC 10A6 / LMG 26770 / FZB42) (Bacillus amyloliquefaciens subsp. plantarum).